The sequence spans 429 residues: Probable M18 family aminopeptidase 2 (429 aa).

Zn(2+)-binding residues include His-82, His-156, and His-401.

Belongs to the peptidase M18 family. Zn(2+) serves as cofactor.

This is Probable M18 family aminopeptidase 2 from Pseudomonas fluorescens (strain Pf0-1).